Here is a 682-residue protein sequence, read N- to C-terminus: uncharacterized protein (682 aa).

This is an uncharacterized protein from Saccharomyces cerevisiae (strain ATCC 204508 / S288c) (Baker's yeast).